A 493-amino-acid polypeptide reads, in one-letter code: Aspartate-semialdehyde dehydrogenase (Non-phosphorylating) (493 aa).

NADP(+) is bound by residues 160–161, 184–187, and 237–238; these read WN, KPAH, and GS. Residue Glu259 is the Proton acceptor of the active site. Leu260 is a binding site for NADP(+). Cys293 serves as the catalytic Nucleophile. Glu390 is a binding site for NADP(+).

This sequence belongs to the aldehyde dehydrogenase family.

Its subcellular location is the cytoplasm. The enzyme catalyses L-aspartate 4-semialdehyde + NAD(+) + H2O = L-aspartate + NADH + 2 H(+). Functionally, involved in the degradation of ectoine, which allows H.elongata to utilize ectoine as both a carbon and a nitrogen source for growth. Probably catalyzes the NAD(+)-dependent oxidation of L-aspartate-semialdehyde to L-aspartate. The chain is Aspartate-semialdehyde dehydrogenase (Non-phosphorylating) from Halomonas elongata (strain ATCC 33173 / DSM 2581 / NBRC 15536 / NCIMB 2198 / 1H9).